Reading from the N-terminus, the 303-residue chain is Signal recognition particle receptor FtsY (303 aa).

GTP is bound by residues 108-115, 190-194, and 254-257; these read GVNGAGKT, DTAGR, and TKLD.

Belongs to the GTP-binding SRP family. FtsY subfamily. As to quaternary structure, part of the signal recognition particle protein translocation system, which is composed of SRP and FtsY. SRP is a ribonucleoprotein composed of Ffh and a 4.5S RNA molecule.

The protein resides in the cell inner membrane. Its subcellular location is the cytoplasm. The enzyme catalyses GTP + H2O = GDP + phosphate + H(+). Its function is as follows. Involved in targeting and insertion of nascent membrane proteins into the cytoplasmic membrane. Acts as a receptor for the complex formed by the signal recognition particle (SRP) and the ribosome-nascent chain (RNC). Interaction with SRP-RNC leads to the transfer of the RNC complex to the Sec translocase for insertion into the membrane, the hydrolysis of GTP by both Ffh and FtsY, and the dissociation of the SRP-FtsY complex into the individual components. This Rickettsia felis (strain ATCC VR-1525 / URRWXCal2) (Rickettsia azadi) protein is Signal recognition particle receptor FtsY.